The following is a 35-amino-acid chain: Neurotoxin (35 aa).

3 cysteine pairs are disulfide-bonded: Cys7–Cys27, Cys14–Cys32, and Cys18–Cys34.

In terms of tissue distribution, expressed by the venom gland.

Its subcellular location is the secreted. Its function is as follows. Neurotoxin. Decreases the action potential of myelinated nerves in mice and frogs. The chain is Neurotoxin from Buthus sp. (strain IY-2001) (Scorpion).